The sequence spans 261 residues: uncharacterized protein (261 aa).

22–46 (IVTGGNSGLGQAFAMALAKAGANIF) lines the NADP(+) pocket. Serine 153 is a substrate binding site. The Proton acceptor role is filled by tyrosine 166.

It belongs to the short-chain dehydrogenases/reductases (SDR) family.

This is an uncharacterized protein from Escherichia coli (strain K12).